Reading from the N-terminus, the 349-residue chain is Ribonucleoside-diphosphate reductase small chain (349 aa).

Fe cation-binding residues include Asp99, Glu130, and His133. The active site involves Tyr137. The Fe cation site is built by Glu192, Glu226, and His229.

Belongs to the ribonucleoside diphosphate reductase small chain family. As to quaternary structure, heterodimer of a large and a small subunit. The cofactor is Fe cation.

It carries out the reaction a 2'-deoxyribonucleoside 5'-diphosphate + [thioredoxin]-disulfide + H2O = a ribonucleoside 5'-diphosphate + [thioredoxin]-dithiol. In terms of biological role, provides the precursors necessary for DNA synthesis. Catalyzes the biosynthesis of deoxyribonucleotides from the corresponding ribonucleotides. The polypeptide is Ribonucleoside-diphosphate reductase small chain (RNR2) (Plasmodium falciparum (isolate Dd2)).